The chain runs to 227 residues: Enolase-phosphatase E1 (227 aa).

The Mg(2+) site is built by D12 and E14. Residues 118-119 (SS) and K159 contribute to the substrate site. D186 contacts Mg(2+).

It belongs to the HAD-like hydrolase superfamily. MasA/MtnC family. Monomer. Mg(2+) serves as cofactor.

The protein localises to the cytoplasm. Its subcellular location is the nucleus. It carries out the reaction 5-methylsulfanyl-2,3-dioxopentyl phosphate + H2O = 1,2-dihydroxy-5-(methylsulfanyl)pent-1-en-3-one + phosphate. It functions in the pathway amino-acid biosynthesis; L-methionine biosynthesis via salvage pathway; L-methionine from S-methyl-5-thio-alpha-D-ribose 1-phosphate: step 3/6. It participates in amino-acid biosynthesis; L-methionine biosynthesis via salvage pathway; L-methionine from S-methyl-5-thio-alpha-D-ribose 1-phosphate: step 4/6. In terms of biological role, bifunctional enzyme that catalyzes the enolization of 2,3-diketo-5-methylthiopentyl-1-phosphate (DK-MTP-1-P) into the intermediate 2-hydroxy-3-keto-5-methylthiopentenyl-1-phosphate (HK-MTPenyl-1-P), which is then dephosphorylated to form the acireductone 1,2-dihydroxy-3-keto-5-methylthiopentene (DHK-MTPene). The protein is Enolase-phosphatase E1 of Vanderwaltozyma polyspora (strain ATCC 22028 / DSM 70294 / BCRC 21397 / CBS 2163 / NBRC 10782 / NRRL Y-8283 / UCD 57-17) (Kluyveromyces polysporus).